The following is a 231-amino-acid chain: GTP-binding protein RHO3 (231 aa).

23 to 30 (GDGACGKT) contacts GTP. An Effector region motif is present at residues 45 to 53 (YEPTVFENY). Residues 70-74 (DTAGQ) and 128-131 (LKCD) each bind GTP. Residues 139-150 (SNAITPNNIQQD) show a composition bias toward polar residues. The interval 139–165 (SNAITPNNIQQDNSVSNDNGNNINSTS) is disordered. Over residues 151–165 (NSVSNDNGNNINSTS) the composition is skewed to low complexity. C228 is modified (cysteine methyl ester). The S-farnesyl cysteine moiety is linked to residue C228. The propeptide at 229-231 (TIM) is removed in mature form.

It belongs to the small GTPase superfamily. Rho family. In terms of assembly, interacts with TOS7.

Its subcellular location is the cell membrane. Its activity is regulated as follows. Activity is positively regulated by the GTPase activating protein (GAP) RGD1. Plays an important role in cell growth. Required to keep the uninucleated state. Modulates morphogenesis during bud growth via directing organization of the actin cytoskeleton and the position of the secretory machinery for exocytosis. This is GTP-binding protein RHO3 from Saccharomyces cerevisiae (strain ATCC 204508 / S288c) (Baker's yeast).